We begin with the raw amino-acid sequence, 295 residues long: Bifunctional protein FolD (295 aa).

Residues 166–168 (GRS), serine 195, and isoleucine 236 contribute to the NADP(+) site.

It belongs to the tetrahydrofolate dehydrogenase/cyclohydrolase family. Homodimer.

It carries out the reaction (6R)-5,10-methylene-5,6,7,8-tetrahydrofolate + NADP(+) = (6R)-5,10-methenyltetrahydrofolate + NADPH. The enzyme catalyses (6R)-5,10-methenyltetrahydrofolate + H2O = (6R)-10-formyltetrahydrofolate + H(+). The protein operates within one-carbon metabolism; tetrahydrofolate interconversion. Catalyzes the oxidation of 5,10-methylenetetrahydrofolate to 5,10-methenyltetrahydrofolate and then the hydrolysis of 5,10-methenyltetrahydrofolate to 10-formyltetrahydrofolate. In Prosthecochloris aestuarii (strain DSM 271 / SK 413), this protein is Bifunctional protein FolD.